The primary structure comprises 177 residues: Large ribosomal subunit protein uL5 (177 aa).

This sequence belongs to the universal ribosomal protein uL5 family. In terms of assembly, part of the 50S ribosomal subunit; part of the 5S rRNA/L5/L18/L25 subcomplex. Contacts the 5S rRNA and the P site tRNA. Forms a bridge to the 30S subunit in the 70S ribosome.

Functionally, this is one of the proteins that bind and probably mediate the attachment of the 5S RNA into the large ribosomal subunit, where it forms part of the central protuberance. In the 70S ribosome it contacts protein S13 of the 30S subunit (bridge B1b), connecting the 2 subunits; this bridge is implicated in subunit movement. Contacts the P site tRNA; the 5S rRNA and some of its associated proteins might help stabilize positioning of ribosome-bound tRNAs. The polypeptide is Large ribosomal subunit protein uL5 (Wolbachia pipientis wMel).